Consider the following 853-residue polypeptide: DNA (cytosine-5)-methyltransferase 3B (853 aa).

Residues 1–20 are compositionally biased toward basic and acidic residues; that stretch reads MKGDTRHLNGEEDAGGREDS. The segment at 1–218 is disordered; it reads MKGDTRHLNG…SGDGDSSEYQ (218 aa). The segment at 1–298 is interaction with DNMT1 and DNMT3A; that stretch reads MKGDTRHLNG…LATFNKLVSY (298 aa). Residues 72–81 are compositionally biased toward acidic residues; the sequence is GDGDGEDGDG. Phosphoserine is present on Ser82. Lys89 participates in a covalent cross-link: Glycyl lysine isopeptide (Lys-Gly) (interchain with G-Cter in SUMO2). Position 96 is a phosphothreonine (Thr96). Residues Ser100 and Ser110 each carry the phosphoserine modification. Residues 115 to 130 are compositionally biased toward basic residues; it reads ERHRPSPRSTRGRQGR. Phosphoserine occurs at positions 136, 195, 202, and 209. Residues 179–199 show a composition bias toward polar residues; it reads GTPQSSSTPYARLAQDSQQGG. Positions 225-283 constitute a PWWP domain; that stretch reads IGDLVWGKIKGFSWWPAMVVSWKATSKRQAMSGMRWVQWFGDGKFSEVSADKLVALGLF. Residues 341–423 are disordered; the sequence is KPTGIEGLKP…DQSREQMASD (83 aa). 2 stretches are compositionally biased toward basic and acidic residues: residues 368–385 and 407–417; these read RKLESRKYENKTRRRTAD and GKDRGDEDQSR. Residue Arg410 is modified to Citrulline. The region spanning 423-555 is the ADD domain; that stretch reads DVANNKSSLE…LQAFFTSDTG (133 aa). Residues 434 to 464 form a GATA-type; atypical zinc finger; sequence GCLSCGRKNPVSFHPLFEGGLCQTCRDRFLE. Positions 435-527 are interaction with the PRC2/EED-EZH2 complex; the sequence is CLSCGRKNPV…LQEPWSCYMC (93 aa). A PHD-type; atypical zinc finger spans residues 475–531; that stretch reads QSYCTVCCEGRELLLCSNTSCCRCFCVECLEVLVGTGTAAEAKLQEPWSCYMCLPQR. The 279-residue stretch at 575 to 853 folds into the SAM-dependent MTase C5-type domain; it reads IRVLSLFDGI…APLKDYFACE (279 aa). S-adenosyl-L-methionine contacts are provided by residues 582–586 and Glu605; that span reads DGIAT. Lys617 participates in a covalent cross-link: Glycyl lysine isopeptide (Lys-Gly) (interchain with G-Cter in SUMO2). 627 to 629 is an S-adenosyl-L-methionine binding site; it reads DVR. The active site involves Cys651. Residue 832-834 participates in S-adenosyl-L-methionine binding; the sequence is RSW.

It belongs to the class I-like SAM-binding methyltransferase superfamily. C5-methyltransferase family. As to quaternary structure, interacts with BAZ2A/TIP5, SUV39H1 and CBX4. Interacts with UHRF1. Interacts with DNMT1 and DNMT3A, SETDB1, UBL1, UBE2I9 and ZHX1. Interacts with the PRC2/EED-EZH2 complex. In terms of processing, sumoylated. Citrullinated by PADI4. As to expression, ubiquitous; highly expressed in fetal liver, heart, kidney, placenta, and at lower levels in spleen, colon, brain, liver, small intestine, lung, peripheral blood mononuclear cells, and skeletal muscle. Isoform 1 is expressed in all tissues except brain, skeletal muscle and PBMC, 3 is ubiquitous, 4 is expressed in all tissues except brain, skeletal muscle, lung and prostate and 5 is detectable only in testis and at very low level in brain and prostate.

The protein resides in the nucleus. The enzyme catalyses a 2'-deoxycytidine in DNA + S-adenosyl-L-methionine = a 5-methyl-2'-deoxycytidine in DNA + S-adenosyl-L-homocysteine + H(+). Its activity is regulated as follows. Activated by binding to the regulatory factor DNMT3L. Required for genome-wide de novo methylation and is essential for the establishment of DNA methylation patterns during development. DNA methylation is coordinated with methylation of histones. May preferentially methylates nucleosomal DNA within the nucleosome core region. May function as transcriptional co-repressor by associating with CBX4 and independently of DNA methylation. Seems to be involved in gene silencing. In association with DNMT1 and via the recruitment of CTCFL/BORIS, involved in activation of BAG1 gene expression by modulating dimethylation of promoter histone H3 at H3K4 and H3K9. Isoforms 4 and 5 are probably not functional due to the deletion of two conserved methyltransferase motifs. Functions as a transcriptional corepressor by associating with ZHX1. Required for DUX4 silencing in somatic cells. The polypeptide is DNA (cytosine-5)-methyltransferase 3B (DNMT3B) (Homo sapiens (Human)).